Here is a 96-residue protein sequence, read N- to C-terminus: Large ribosomal subunit protein uL4 (96 aa).

The disordered stretch occupies residues 77–96 (RAPNKKVKRRELKKNPLKNL). Basic residues predominate over residues 79-96 (PNKKVKRRELKKNPLKNL).

Belongs to the universal ribosomal protein uL4 family. As to quaternary structure, component of the large ribosomal subunit.

It is found in the cytoplasm. Component of the large ribosomal subunit. The ribosome is a large ribonucleoprotein complex responsible for the synthesis of proteins in the cell. This is Large ribosomal subunit protein uL4 (rpl4) from Xenopus tropicalis (Western clawed frog).